The chain runs to 327 residues: MKFLDQVKIYVKAGNGGHGSPSFRREKFIEYGGPDGGDGGKGGTIYLRSERNLNTLIDYRFQQHHKAGRGVNGSGQNRTGHSGEDLILKVPIGTQVFEEDNKTLIYDFKKEGEEFIVANGGKGGLGNTRFKSSTNRAPKKFTKGAPGEEYVIWLQLKTIADVGIVGLPNAGKSSLLASITNAMPKIANYKFTTLNPNLGVASYDDKEITLADIPGLVEGAHEGVGLGIQFLKHIERCKTLMHLIDITDEDLENTYKQVRNELGSYSKDLLEKKEIIVLNKTDLLEEEEVKEILKNFSKNKDSEVVTLSTLEKGSISRIKAKLLSYVS.

In terms of domain architecture, Obg spans 1–159 (MKFLDQVKIY…YVIWLQLKTI (159 aa)). The region spanning 160–327 (ADVGIVGLPN…IKAKLLSYVS (168 aa)) is the OBG-type G domain. GTP-binding positions include 166–173 (GLPNAGKS), 191–195 (FTTLN), 212–215 (DIPG), 279–282 (NKTD), and 308–310 (STL). Residues serine 173 and threonine 193 each contribute to the Mg(2+) site.

It belongs to the TRAFAC class OBG-HflX-like GTPase superfamily. OBG GTPase family. Monomer. The cofactor is Mg(2+).

It localises to the cytoplasm. Its function is as follows. An essential GTPase which binds GTP, GDP and possibly (p)ppGpp with moderate affinity, with high nucleotide exchange rates and a fairly low GTP hydrolysis rate. Plays a role in control of the cell cycle, stress response, ribosome biogenesis and in those bacteria that undergo differentiation, in morphogenesis control. This is GTPase Obg from Pelagibacter ubique (strain HTCC1062).